Consider the following 512-residue polypeptide: tRNA-2-methylthio-N(6)-dimethylallyladenosine synthase (512 aa).

Residues 1 to 22 (MVAHDAAAGVTGEGAGPPVRRA) form a disordered region. An MTTase N-terminal domain is found at 25-141 (RTYQVRTYGC…LPTLLERARH (117 aa)). Residues Cys-34, Cys-70, Cys-104, Cys-178, Cys-182, and Cys-185 each coordinate [4Fe-4S] cluster. Positions 164 to 400 (RESAYAAWVS…IALQEQISLE (237 aa)) constitute a Radical SAM core domain. One can recognise a TRAM domain in the interval 403–471 (RALVGQAVEV…PHHLIADAGV (69 aa)).

Belongs to the methylthiotransferase family. MiaB subfamily. Monomer. [4Fe-4S] cluster is required as a cofactor.

Its subcellular location is the cytoplasm. The enzyme catalyses N(6)-dimethylallyladenosine(37) in tRNA + (sulfur carrier)-SH + AH2 + 2 S-adenosyl-L-methionine = 2-methylsulfanyl-N(6)-dimethylallyladenosine(37) in tRNA + (sulfur carrier)-H + 5'-deoxyadenosine + L-methionine + A + S-adenosyl-L-homocysteine + 2 H(+). In terms of biological role, catalyzes the methylthiolation of N6-(dimethylallyl)adenosine (i(6)A), leading to the formation of 2-methylthio-N6-(dimethylallyl)adenosine (ms(2)i(6)A) at position 37 in tRNAs that read codons beginning with uridine. The polypeptide is tRNA-2-methylthio-N(6)-dimethylallyladenosine synthase (Mycobacterium bovis (strain ATCC BAA-935 / AF2122/97)).